The following is a 100-amino-acid chain: NADH-quinone oxidoreductase subunit K (100 aa).

3 helical membrane-spanning segments follow: residues 4–24 (MQHGLILAAILFTLGLTGLLI), 28–48 (LIFMLISLEVMINSAALAWVV), and 60–80 (IFYLLAITLAAAEASIGLALL).

The protein belongs to the complex I subunit 4L family. As to quaternary structure, NDH-1 is composed of 13 different subunits. Subunits NuoA, H, J, K, L, M, N constitute the membrane sector of the complex.

It is found in the cell membrane. It catalyses the reaction a quinone + NADH + 5 H(+)(in) = a quinol + NAD(+) + 4 H(+)(out). In terms of biological role, NDH-1 shuttles electrons from NADH, via FMN and iron-sulfur (Fe-S) centers, to quinones in the respiratory chain. The immediate electron acceptor for the enzyme in this species is believed to be ubiquinone. Couples the redox reaction to proton translocation (for every two electrons transferred, four hydrogen ions are translocated across the cytoplasmic membrane), and thus conserves the redox energy in a proton gradient. This chain is NADH-quinone oxidoreductase subunit K, found in Hamiltonella defensa subsp. Acyrthosiphon pisum (strain 5AT).